Here is a 246-residue protein sequence, read N- to C-terminus: Proteasome subunit alpha (246 aa).

The protein belongs to the peptidase T1A family. The 20S proteasome core is composed of 14 alpha and 14 beta subunits that assemble into four stacked heptameric rings, resulting in a barrel-shaped structure. The two inner rings, each composed of seven catalytic beta subunits, are sandwiched by two outer rings, each composed of seven alpha subunits. The catalytic chamber with the active sites is on the inside of the barrel. Has a gated structure, the ends of the cylinder being occluded by the N-termini of the alpha-subunits. Is capped by the proteasome-associated ATPase, ARC. Can also interact with the bacterial proteasome activator Bpa through the C-terminal hydrophobic-tyrosine-X motif (HbYX motif) of Bpa; Bpa forms a homooligomeric ring-like structure which stacks co-axially with the proteasomal alpha-rings. In terms of processing, pupylated at an undetermined lysine residue by the prokaryotic ubiquitin-like protein Pup with the help of the ligase PafA, which leads to its degradation by the proteasome and thereby constitutes a negative auto-regulation.

The protein resides in the cytoplasm. Its pathway is protein degradation; proteasomal Pup-dependent pathway. Its activity is regulated as follows. The formation of the proteasomal ATPase ARC-20S proteasome complex, likely via the docking of the C-termini of ARC into the intersubunit pockets in the alpha-rings, may trigger opening of the gate for substrate entry. Interconversion between the open-gate and close-gate conformations leads to a dynamic regulation of the 20S proteasome proteolysis activity. PPS auto-regulates its own activity via pupylation and degradation of its components. Peptidolytic activity is inhibited by N-acetyl-Leu-Leu-norleucinal (Ac-LLnL) in vitro. In terms of biological role, component of the proteasome core, a large protease complex with broad specificity involved in protein degradation. The M.smegmatis proteasome is able to cleave oligopeptides after hydrophobic residues, thus displaying chymotrypsin-like activity. In complex with the ATPase Mpa, degrades protein targets conjugated to a prokaryotic ubiquitin-like protein (Pup). Identified substrates of the M.smegmatis proteasome are the pupylated SodA and Ino1 proteins. The Pup-proteasome system (PPS) is essential for survival under starvation; PPS likely functions to recycle amino acids under nitrogen starvation, thereby enabling the cell to maintain basal metabolic activities. In Mycolicibacterium smegmatis (strain ATCC 700084 / mc(2)155) (Mycobacterium smegmatis), this protein is Proteasome subunit alpha.